The chain runs to 417 residues: Actin-related protein 10 (417 aa).

Belongs to the actin family. As to quaternary structure, subunit of dynactin, a multiprotein complex part of a tripartite complex with dynein and a adapter, such as BICDL1, BICD2 or HOOK3. The dynactin complex is built around ACTR1A/ACTB filament and consists of an actin-related filament composed of a shoulder domain, a pointed end and a barbed end. Its length is defined by its flexible shoulder domain. The soulder is composed of 2 DCTN1 subunits, 4 DCTN2 and 2 DCTN3. The 4 DCNT2 (via N-terminus) bind the ACTR1A filament and act as molecular rulers to determine the length. The pointed end is important for binding dynein-dynactin cargo adapters. Consists of 4 subunits: ACTR10, DCNT4, DCTN5 and DCTN6. The barbed end is composed of a CAPZA1:CAPZB heterodimers, which binds ACTR1A/ACTB filament and dynactin and stabilizes dynactin.

Its subcellular location is the cytoplasm. It localises to the cytoskeleton. In terms of biological role, part of the dynactin complex that activates the molecular motor dynein for ultra-processive transport along microtubules. This Homo sapiens (Human) protein is Actin-related protein 10 (ACTR10).